A 1206-amino-acid chain; its full sequence is MIDVNNFEYMKIGLASPNKIRSWSRGEVKKPETINYRTLKPEKDGLFCERIFGPQKDWECHCGKYKRVRYKGVVCDRCGVEVTRAKVRRERMGHIELAAPVSHIWYFKGIPSRMGLVLDMSPRSLEEVIYFASYVVTEPGDTPLEKKQLLSEKEYRAYYDKYGRTFTASMGAEAIRKLLADIDLQKEVNALKEELETAQGQRRTRAIKRLEVLEAFRNSGNEPSWMVLDVLPVIPPELRPMVQLDGGRFATSDLNDLYRRVINRNNRLKRLLDLGAPNIIVQNEKRMLQEAVDALIDNGRRGRPVTGPGNRPLKSLSHMLKGKQGRFRQNLLGKRVDYSGRSVIVVGPNLKMYQCGLPKEMALELFKPFVMKELVSKGLAHNIKSAKRKVERVQPEVWDVLEEVIREHPVLLNRAPTLHRLGIQAFEPILVEGRAIKLHPLVCTAYNADFDGDQMAVHVPLSAEAQAEARILMLAAQNILNPKDGKPVVTPSQDMVLGNYYLTMENANARGEGSVFKDSNEALIAYQNGYVHLHTRIAVPVASLNKPTFADEESNMLLLTTVGKLLFNEIMPDSFPYINEPTASNLEVKTPEKYLVPSNTNVKELLKERDLVPPFKKGFLGNIISEVFKKFKITETSKMLDRMKDLGFKYSTKAGITVGVSDIVVLSEKKEILDEADKKVERIMKQFRRGLITEEERYDRVISIWSDAKDLIQSKLMGTLDARNPIFMMSDSGARGNASNFTQLAGMRGLMANPSGRIIELPIKSSFREGLTVLEYFISTHGARKGLADTALKTADSGYLTRRLVDVAQDVIVRENDCGTDRGLEVTAIKEGTETIEGLYDRLVGRVAFKTVRHPETDEVLVRRGELMNEDTAKQIVDAGVESVTIRSVFTCNTHHGVCKACYGRNLATGSDVEVGEAVGIIAAQSIGEPGTQLTMRTFHTGGVAGDDITQGLPRIQELFEARNPKGQAVITEIDGDVVDVRDGDKREVTVQSELETKNYSIPYGSRLKVAVGDKVVAGQTLTEGSIDPKELLKVTGMGGVQEYLLREVQKVYRLQGVEIGDKHVEVMVRQMLRKVRVVDAGDTGILPGSLVEIQRFNEANKKVLLSNMRPATGRPVLLGITKASLETDSFLSAASFQETTRVLTDAAIKGKRDELLGLKENVIIGKLVPAGTGLARYKTLGIHSAHDERAENEEAGTPEEVLVQD.

Residues cysteine 60, cysteine 62, cysteine 75, and cysteine 78 each coordinate Zn(2+). 3 residues coordinate Mg(2+): aspartate 449, aspartate 451, and aspartate 453. Zn(2+) contacts are provided by cysteine 818, cysteine 892, cysteine 899, and cysteine 902.

The protein belongs to the RNA polymerase beta' chain family. The RNAP catalytic core consists of 2 alpha, 1 beta, 1 beta' and 1 omega subunit. When a sigma factor is associated with the core the holoenzyme is formed, which can initiate transcription. Requires Mg(2+) as cofactor. Zn(2+) serves as cofactor.

The enzyme catalyses RNA(n) + a ribonucleoside 5'-triphosphate = RNA(n+1) + diphosphate. DNA-dependent RNA polymerase catalyzes the transcription of DNA into RNA using the four ribonucleoside triphosphates as substrates. The protein is DNA-directed RNA polymerase subunit beta' of Shouchella clausii (strain KSM-K16) (Alkalihalobacillus clausii).